The sequence spans 268 residues: Indole-3-glycerol phosphate synthase (268 aa).

The protein belongs to the TrpC family.

The enzyme catalyses 1-(2-carboxyphenylamino)-1-deoxy-D-ribulose 5-phosphate + H(+) = (1S,2R)-1-C-(indol-3-yl)glycerol 3-phosphate + CO2 + H2O. It functions in the pathway amino-acid biosynthesis; L-tryptophan biosynthesis; L-tryptophan from chorismate: step 4/5. The polypeptide is Indole-3-glycerol phosphate synthase (Acinetobacter baumannii (strain AB0057)).